The sequence spans 37 residues: MKVRPSVKKMCEKCKIIKRKGVVRVICVNPKHKQRQG.

The protein belongs to the bacterial ribosomal protein bL36 family.

In Nitratiruptor sp. (strain SB155-2), this protein is Large ribosomal subunit protein bL36.